The sequence spans 5207 residues: NBPF family member NBPF20 (5207 aa).

Olduvai domains follow at residues 5–77, 80–135, 136–228, 229–321, 324–379, 380–472, 473–565, 568–623, 624–716, 717–809, 812–867, 868–960, 961–1053, 1056–1111, 1112–1204, 1205–1297, 1300–1355, 1356–1448, 1449–1541, 1544–1599, 1600–1692, 1693–1785, 1788–1843, 1844–1936, 1937–2029, 2032–2087, 2088–2180, 2181–2273, 2276–2331, 2332–2424, 2425–2517, 2520–2575, 2576–2668, 2669–2761, 2764–2819, 2820–2912, 2913–3005, 3008–3063, 3064–3156, 3157–3249, 3252–3307, 3308–3400, 3401–3493, 3496–3551, 3552–3644, 3645–3737, 3740–3795, 3796–3888, 3889–3981, 3984–4039, 4040–4132, 4133–4225, 4228–4283, 4284–4376, 4377–4452, 4453–4545, 4546–4621, 4622–4713, 4716–4771, 4772–4864, 4865–4957, 4960–5015, 5016–5108, and 5109–5207; these read SREL…PSCP, SREL…LDVD, RTKK…RSKK, ERRR…PSCP, ERRR…LDVD, RTKK…PSCP, and KRRR…IFPQ. 2 disordered regions span residues 137-157 and 215-256; these read TKKD…LSRE and KGKG…LDEK. The span at 216-234 shows a compositional bias: basic residues; that stretch reads GKGKKRRGRRSKKERRRGR. Disordered stretches follow at residues 381–403 and 459–513; these read TKKD…RELL and KGKG…DRSY. Residues 460–478 are compositionally biased toward basic residues; sequence GKGKKRRGRRSKKERRRGR. Basic and acidic residues predominate over residues 492 to 502; sequence LSRELLDEKGP. Disordered regions lie at residues 625 to 647 and 703 to 744; these read TKKD…RELL and KGKG…LDEK. Residues 704–722 are compositionally biased toward basic residues; it reads GKGKKRRGRRSKKERRRGR. 2 disordered regions span residues 869 to 891 and 947 to 1001; these read TKKD…RELL and KGKG…DRSY. The span at 948–966 shows a compositional bias: basic residues; sequence GKGKKRRGRRSKKERRRGR. Residues 980 to 990 show a composition bias toward basic and acidic residues; the sequence is LSRELLDEKGP. Disordered stretches follow at residues 1113–1135 and 1191–1245; these read TKKD…RELL and KGKG…DRSY. The span at 1192 to 1210 shows a compositional bias: basic residues; it reads GKGKKRRGRRSKKERRRGR. Residues 1224–1234 show a composition bias toward basic and acidic residues; that stretch reads LSRELLDEKGP. 2 disordered regions span residues 1357-1379 and 1435-1489; these read TKKD…RELL and KGKG…DRSY. The span at 1436 to 1454 shows a compositional bias: basic residues; sequence GKGKKRRGRRSKKERRRGR. Over residues 1468 to 1478 the composition is skewed to basic and acidic residues; sequence LSRELLDEKGP. 2 disordered regions span residues 1601-1623 and 1679-1733; these read TKKD…RELL and KGKG…DRSY. Over residues 1680 to 1698 the composition is skewed to basic residues; the sequence is GKGKKRRGRRSKKERRRGR. Residues 1712-1722 show a composition bias toward basic and acidic residues; it reads LSRELLDEKGP. Disordered regions lie at residues 1845 to 1867 and 1923 to 1964; these read TKKD…RELL and KGKG…LDEK. The segment covering 1924-1942 has biased composition (basic residues); the sequence is GKGKKRRGRRSKKERRRGR. Disordered stretches follow at residues 2089–2111 and 2167–2208; these read TKKD…RELL and KGKG…LDEK. A compositionally biased stretch (basic residues) spans 2168–2186; the sequence is GKGKKRRGRRSKKERRRGR. Disordered stretches follow at residues 2333 to 2355 and 2411 to 2452; these read TKKD…RELL and KGKG…LDEK. Residues 2412-2430 are compositionally biased toward basic residues; the sequence is GKGKKRRGRRSKKERRRGR. 2 disordered regions span residues 2577–2599 and 2655–2709; these read TKKD…RELL and KGKG…DRSY. A compositionally biased stretch (basic residues) spans 2656–2674; the sequence is GKGKKRRGRRSKKERRRGR. The segment covering 2688–2698 has biased composition (basic and acidic residues); sequence LSRELLDEKGP. Disordered stretches follow at residues 2821-2843 and 2899-2953; these read TKKD…RELL and KGKG…DRSY. Basic residues predominate over residues 2900–2918; the sequence is GKGKKRRGRRSKKERRRGR. Basic and acidic residues predominate over residues 2932-2942; it reads LSRELLDEKGP. Disordered regions lie at residues 3065 to 3087 and 3143 to 3197; these read TKKD…RELL and KGKG…DRSY. Positions 3144–3162 are enriched in basic residues; that stretch reads GKGKKRRGRRSKKERRRGR. Over residues 3176 to 3186 the composition is skewed to basic and acidic residues; the sequence is LSRELLDEKGP. Disordered stretches follow at residues 3309 to 3331 and 3387 to 3441; these read TKKD…RELL and KGKG…DRSY. A compositionally biased stretch (basic residues) spans 3388–3406; that stretch reads GKGKKRRGRRSKKERRRGR. Residues 3420–3430 are compositionally biased toward basic and acidic residues; the sequence is LSRELLDEKGP. 2 disordered regions span residues 3553–3575 and 3631–3672; these read TKKD…RELL and KGKG…LDEK. Positions 3632–3650 are enriched in basic residues; sequence GKGKKRRGRRSKKERRRGR. Disordered stretches follow at residues 3797 to 3819 and 3875 to 3916; these read TKKD…RELL and KGKG…LDEK. Positions 3876–3894 are enriched in basic residues; that stretch reads GKGKKRRGRRSKKERRRGR. Disordered stretches follow at residues 4041–4063 and 4119–4160; these read TKKD…RELL and KGKG…LDEK. Residues 4120–4138 show a composition bias toward basic residues; sequence GKGKKRRGRRSKKERRRGR. Disordered regions lie at residues 4285-4307, 4361-4404, 4453-4474, and 4530-4573; these read TKKD…RELL, EKKG…LDEK, and RTKK…LSRE. The segment covering 4364 to 4382 has biased composition (basic residues); it reads GKGKKRRGRRSKKERRRGR. Residues 4533-4551 show a composition bias toward basic residues; that stretch reads GKGKKRRGRRSKKERRRGR. 2 disordered regions span residues 4773–4793 and 4851–4889; these read TKKD…LSRE and KGKG…RELL. A compositionally biased stretch (basic residues) spans 4852 to 4870; it reads GKGKKRRGRRSKKERRRGR. Disordered stretches follow at residues 5017–5037 and 5094–5128; these read TKKD…LSRE and KKGK…CPRL. Residues 5096 to 5114 are compositionally biased toward basic residues; sequence GKGKKRRGRRSKKKRRRGR.

It belongs to the NBPF family.

The protein localises to the cytoplasm. This chain is NBPF family member NBPF20, found in Homo sapiens (Human).